Reading from the N-terminus, the 415-residue chain is MQLTAVGLNHQTAPLSIREKLAFAAAALPKAVRNLARSNAATEAVILSTCNRTELYCVGDSEEIIRWLADYHSLPIEEIRPYLYALDMQETVRHAFRVACGLDSMVLGEPQILGQIKDAVRVAQEQESMGKKLNALFQKTFSVAKEVRTDTAVGENSVSMASASVKLAEQIFPDIGDLNVLFIGAGEMIELVATYFAAKSPRLMTVANRTLARAQELCDKLGVNAEPCLLSDLPAILHDYDVVVSSTASQLPIVGKGMVERALKQRQSMPLFMLDLAVPRDIEAEVGDLNDAYLYTVDDMVNIVQSGKEARQKAAAAAETLVSEKVAEFVRQQQGRQSVPLIKALRDEGEKARKQVLENAMKQLAKGATAEEVLERLSVQLTNKLLHSPTQTLNKAGEEDKDLVHAVAQIYHLDK.

Residues 49-52, Ser-104, 109-111, and Gln-115 each bind substrate; these read TCNR and EPQ. Residue Cys-50 is the Nucleophile of the active site. Residue 184–189 coordinates NADP(+); that stretch reads GAGEMI.

Belongs to the glutamyl-tRNA reductase family. Homodimer.

The enzyme catalyses (S)-4-amino-5-oxopentanoate + tRNA(Glu) + NADP(+) = L-glutamyl-tRNA(Glu) + NADPH + H(+). It functions in the pathway porphyrin-containing compound metabolism; protoporphyrin-IX biosynthesis; 5-aminolevulinate from L-glutamyl-tRNA(Glu): step 1/2. Its function is as follows. Catalyzes the NADPH-dependent reduction of glutamyl-tRNA(Glu) to glutamate 1-semialdehyde (GSA). In Neisseria meningitidis serogroup B (strain ATCC BAA-335 / MC58), this protein is Glutamyl-tRNA reductase.